The following is a 423-amino-acid chain: Glycine amidinotransferase, mitochondrial (423 aa).

Residues 1–43 constitute a mitochondrion transit peptide; the sequence is MLRVRCLRGGSRGAEAVHYIGSRLGGSLTGWVQRTFQSTQAAT. Phosphoserine occurs at positions 46 and 49. Residue Asp170 coordinates arginine. Active-site residues include Asp254 and His303. 4 residues coordinate arginine: Asp305, Arg322, Ser354, and Ser355. Lys385 is modified (N6-acetyllysine). The active-site Amidino-cysteine intermediate is Cys407.

This sequence belongs to the amidinotransferase family. In terms of assembly, homodimer. Expressed in kidney, brain, gonads, uterus, and embryonic head, chest and abdomen. Maternally expressed in the placenta and yolk sac of embryos.

It localises to the mitochondrion inner membrane. The enzyme catalyses L-arginine + glycine = guanidinoacetate + L-ornithine. The catalysed reaction is 4-aminobutanoate + L-arginine = 4-guanidinobutanoate + L-ornithine. It catalyses the reaction beta-alanine + L-arginine = 3-guanidinopropanoate + L-ornithine. It carries out the reaction taurine + L-arginine = taurocyamine + L-ornithine. It participates in amine and polyamine biosynthesis; creatine biosynthesis; creatine from L-arginine and glycine: step 1/2. Functionally, transamidinase that catalyzes the transfer of the amidino group of L-arginine onto the amino moiety of acceptor metabolites such as glycine, beta-alanine, gamma-aminobutyric acid (GABA) and taurine yielding the corresponding guanidine derivatives. Catalyzes the rate-limiting step of creatine biosynthesis, namely the transfer of the amidino group from L-arginine to glycine to generate guanidinoacetate, which is then methylated by GAMT to form creatine. Provides creatine as a source for ATP generation in tissues with high energy demands, in particular skeletal muscle, heart and brain. The protein is Glycine amidinotransferase, mitochondrial (Gatm) of Mus musculus (Mouse).